The chain runs to 396 residues: Acetate kinase (396 aa).

Asn-7 provides a ligand contact to Mg(2+). Lys-14 serves as a coordination point for ATP. Arg-91 contacts substrate. Asp-148 functions as the Proton donor/acceptor in the catalytic mechanism. ATP is bound by residues 208 to 212 (HLGNG), 283 to 285 (DFR), and 331 to 335 (GIGEN). Mg(2+) is bound at residue Glu-384.

It belongs to the acetokinase family. In terms of assembly, homodimer. Requires Mg(2+) as cofactor. The cofactor is Mn(2+).

The protein localises to the cytoplasm. The enzyme catalyses acetate + ATP = acetyl phosphate + ADP. It participates in metabolic intermediate biosynthesis; acetyl-CoA biosynthesis; acetyl-CoA from acetate: step 1/2. Its function is as follows. Catalyzes the formation of acetyl phosphate from acetate and ATP. Can also catalyze the reverse reaction. The chain is Acetate kinase from Desulforamulus reducens (strain ATCC BAA-1160 / DSM 100696 / MI-1) (Desulfotomaculum reducens).